The chain runs to 179 residues: Cell division protein SepF (179 aa).

The disordered stretch occupies residues 22-55 (LPYEKRDEPVFTSVNSSQEPALPMNQPSQSAGTK). Residues 33–55 (TSVNSSQEPALPMNQPSQSAGTK) show a composition bias toward polar residues.

It belongs to the SepF family. As to quaternary structure, homodimer. Interacts with FtsZ.

Its subcellular location is the cytoplasm. Cell division protein that is part of the divisome complex and is recruited early to the Z-ring. Probably stimulates Z-ring formation, perhaps through the cross-linking of FtsZ protofilaments. Its function overlaps with FtsA. This chain is Cell division protein SepF, found in Streptococcus pneumoniae (strain Taiwan19F-14).